Reading from the N-terminus, the 322-residue chain is Basic 30 kDa endochitinase (322 aa).

An N-terminal signal peptide occupies residues 1 to 22 (MRLSEFTTLFLLFSVLLLSASA). In terms of domain architecture, Chitin-binding type-1 spans 23-64 (EQCGSQAGGALCASGLCCSKFGWCGNTNEYCGPGNCQSQCPG). Cystine bridges form between Cys25–Cys40, Cys34–Cys46, Cys39–Cys53, and Cys58–Cys62. A 4-hydroxyproline mark is found at Pro66 and Pro68. 3 disulfide bridges follow: Cys93–Cys156, Cys168–Cys176, and Cys275–Cys307. Glu138 functions as the Proton donor in the catalytic mechanism. The propeptide at 316 to 322 (GLLVDIM) is removed in mature form.

Belongs to the glycosyl hydrolase 19 family. Chitinase class I subfamily. The 4-hydroxyproline residues are not glycosylated in this plant vacuolar protein.

It is found in the vacuole. The protein resides in the secreted. The protein localises to the cell wall. It catalyses the reaction Random endo-hydrolysis of N-acetyl-beta-D-glucosaminide (1-&gt;4)-beta-linkages in chitin and chitodextrins.. Defense against chitin-containing fungal pathogens. This chain is Basic 30 kDa endochitinase (CHI9), found in Solanum lycopersicum (Tomato).